Consider the following 54-residue polypeptide: Conotoxin vc5c (54 aa).

Positions 1–14 (VILLLLIASIPSDA) are cleaved as a signal peptide. Residues 15-43 (VQLKTKDDMPLASFHGNARRTLQMLSNKR) constitute a propeptide that is removed on maturation. E50 bears the 4-carboxyglutamate mark. W51 carries the post-translational modification 6'-bromotryptophan.

This sequence belongs to the conotoxin T superfamily. Post-translationally, contains 2 disulfide bonds that can be either 'C1-C3, C2-C4' or 'C1-C4, C2-C3', since these disulfide connectivities have been observed for conotoxins with cysteine framework V (for examples, see AC P0DQQ7 and AC P81755). Expressed by the venom duct.

The protein resides in the secreted. The polypeptide is Conotoxin vc5c (Conus victoriae (Queen Victoria cone)).